Reading from the N-terminus, the 275-residue chain is Translation initiation factor 2 subunit alpha (275 aa).

The 72-residue stretch at 12–83 folds into the S1 motif domain; that stretch reads GEFVVATVKR…RKGHIDLSLR (72 aa).

Belongs to the eIF-2-alpha family. In terms of assembly, heterotrimer composed of an alpha, a beta and a gamma chain.

Its function is as follows. eIF-2 functions in the early steps of protein synthesis by forming a ternary complex with GTP and initiator tRNA. The protein is Translation initiation factor 2 subunit alpha (eif2a) of Pyrococcus abyssi (strain GE5 / Orsay).